A 695-amino-acid polypeptide reads, in one-letter code: Elongation factor G 1 (695 aa).

The region spanning 6–282 is the tr-type G domain; that stretch reads STFRNIGISA…AITYYLPDPT (277 aa). GTP is bound by residues 15–22, 82–86, and 136–139; these read AHIDSGKT, DTPGH, and NKCD.

The protein belongs to the TRAFAC class translation factor GTPase superfamily. Classic translation factor GTPase family. EF-G/EF-2 subfamily.

Its subcellular location is the cytoplasm. Catalyzes the GTP-dependent ribosomal translocation step during translation elongation. During this step, the ribosome changes from the pre-translocational (PRE) to the post-translocational (POST) state as the newly formed A-site-bound peptidyl-tRNA and P-site-bound deacylated tRNA move to the P and E sites, respectively. Catalyzes the coordinated movement of the two tRNA molecules, the mRNA and conformational changes in the ribosome. The sequence is that of Elongation factor G 1 (fusA) from Treponema pallidum (strain Nichols).